A 286-amino-acid polypeptide reads, in one-letter code: Oxidoreductase clz15 (286 aa).

Belongs to the asaB hydroxylase/desaturase family.

Its pathway is secondary metabolite biosynthesis. Its function is as follows. Oxidoreductase; part of the gene cluster that mediates the biosynthesis of squalestatin S1 (SQS1, also known as zaragozic acid A), a heavily oxidized fungal polyketide that offers potent cholesterol lowering activity by targeting squalene synthase (SS). SQS1 is composed of a 2,8-dioxobicyclic[3.2.1]octane-3,4,5-tricarboxyclic acid core that is connected to two lipophilic polyketide arms. These initial steps feature the priming of an unusual benzoic acid starter unit onto the highly reducing polyketide synthase clz14, followed by oxaloacetate extension and product release to generate a tricarboxylic acid containing product. The phenylalanine ammonia lyase (PAL) clz10 and the acyl-CoA ligase clz12 are involved in transforming phenylalanine into benzoyl-CoA. The citrate synthase-like protein clz17 is involved in connecting the C-alpha-carbons of the hexaketide chain and oxaloacetate to afford the tricarboxylic acid unit. The potential hydrolytic enzymes, clz11 and clz13, are in close proximity to pks2 and may participate in product release. On the other side, the tetraketide arm is synthesized by a the squalestatin tetraketide synthase clz2 and enzymatically esterified to the core in the last biosynthetic step, by the acetyltransferase clz6. The biosynthesis of the tetraketide must involve 3 rounds of chain extension. After the first and second rounds methyl-transfer occurs, and in all rounds of extension the ketoreductase and dehydratase are active. The enoyl reductase and C-MeT of clz2 are not active in the final round of extension. The acetyltransferase clz6 appears to have a broad substrate selectivity for its acyl CoA substrate, allowing the in vitro synthesis of novel squalestatins. The biosynthesis of SQS1 requires several oxidative steps likely performed by oxidoreductases clz3, clz15 and clz16. Finally, in support of the identification of the cluster as being responsible for SQS1 production, the cluster contains a gene encoding a putative squalene synthase (SS) clz20, suggesting a likely mechanism for self-resistance. In Cochliobolus lunatus (Filamentous fungus), this protein is Oxidoreductase clz15.